We begin with the raw amino-acid sequence, 195 residues long: MKKFAVFASGNGSNFEAIVTRLKEENWDASAALLVCDKPQAKVIERAEAFHIPSFAFEPKSYENKAAFEQAIIEQLRLHEVELIALAGYMRLIGDTLLQAYGGKIINIHPSLLPAFPGIDAVGQAFRAGVKVAGITVHYVDEGMDTGPIIAQKAIEIDEHDTLETIEQRIHKLEHKWYPSVIKQLLGLNNRGEKA.

G12–N14 is a binding site for N(1)-(5-phospho-beta-D-ribosyl)glycinamide. (6R)-10-formyltetrahydrofolate is bound by residues K65, M90 to I93, and N107. The active-site Proton donor is the H109.

The protein belongs to the GART family.

It carries out the reaction N(1)-(5-phospho-beta-D-ribosyl)glycinamide + (6R)-10-formyltetrahydrofolate = N(2)-formyl-N(1)-(5-phospho-beta-D-ribosyl)glycinamide + (6S)-5,6,7,8-tetrahydrofolate + H(+). It participates in purine metabolism; IMP biosynthesis via de novo pathway; N(2)-formyl-N(1)-(5-phospho-D-ribosyl)glycinamide from N(1)-(5-phospho-D-ribosyl)glycinamide (10-formyl THF route): step 1/1. In terms of biological role, catalyzes the transfer of a formyl group from 10-formyltetrahydrofolate to 5-phospho-ribosyl-glycinamide (GAR), producing 5-phospho-ribosyl-N-formylglycinamide (FGAR) and tetrahydrofolate. In Bacillus subtilis (strain 168), this protein is Phosphoribosylglycinamide formyltransferase.